The primary structure comprises 303 residues: Probable cell division protein WhiA (303 aa).

The H-T-H motif DNA-binding region spans 272–303; the sequence is SIQQLADSLSTPLTKSGVNHRLRKINKIADEL.

This sequence belongs to the WhiA family.

In terms of biological role, involved in cell division and chromosome segregation. The protein is Probable cell division protein WhiA of Streptococcus pneumoniae (strain Hungary19A-6).